The following is a 64-amino-acid chain: Large ribosomal subunit protein bL35 (64 aa).

Belongs to the bacterial ribosomal protein bL35 family.

This is Large ribosomal subunit protein bL35 from Shewanella oneidensis (strain ATCC 700550 / JCM 31522 / CIP 106686 / LMG 19005 / NCIMB 14063 / MR-1).